Reading from the N-terminus, the 216-residue chain is Trimethylamine corrinoid protein 1 (216 aa).

One can recognise a B12-binding N-terminal domain in the interval 1 to 92; that stretch reads MANKEEIIAK…EMEKRKSQTK (92 aa). Positions 94 to 216 constitute a B12-binding domain; the sequence is LGTIVIGTIE…VVSKVKAALL (123 aa). H107 serves as a coordination point for methylcob(III)alamin.

It belongs to the methylamine corrinoid protein family. In terms of assembly, can form a complex with MttB.

It functions in the pathway one-carbon metabolism; methanogenesis from trimethylamine. In terms of biological role, acts probably as a methyl group carrier between MttB and either MtbA or MtaA. In Methanosarcina mazei (strain ATCC BAA-159 / DSM 3647 / Goe1 / Go1 / JCM 11833 / OCM 88) (Methanosarcina frisia), this protein is Trimethylamine corrinoid protein 1 (mttC1).